A 329-amino-acid chain; its full sequence is Beta-ketoacyl-[acyl-carrier-protein] synthase III (329 aa).

Residues cysteine 113 and histidine 255 contribute to the active site. The tract at residues 256-260 (QANQR) is ACP-binding. Asparagine 285 is an active-site residue.

It belongs to the thiolase-like superfamily. FabH family. In terms of assembly, homodimer.

The protein localises to the cytoplasm. It catalyses the reaction malonyl-[ACP] + acetyl-CoA + H(+) = 3-oxobutanoyl-[ACP] + CO2 + CoA. It functions in the pathway lipid metabolism; fatty acid biosynthesis. Catalyzes the condensation reaction of fatty acid synthesis by the addition to an acyl acceptor of two carbons from malonyl-ACP. Catalyzes the first condensation reaction which initiates fatty acid synthesis and may therefore play a role in governing the total rate of fatty acid production. Possesses both acetoacetyl-ACP synthase and acetyl transacylase activities. Its substrate specificity determines the biosynthesis of branched-chain and/or straight-chain of fatty acids. The polypeptide is Beta-ketoacyl-[acyl-carrier-protein] synthase III (Chlorobium chlorochromatii (strain CaD3)).